A 359-amino-acid chain; its full sequence is GATA-binding factor 1-A (359 aa).

The interval 1 to 21 is disordered; the sequence is MDYTTLTTQDPDPNYTESGLA. 2 GATA-type zinc fingers span residues 178 to 202 and 232 to 256; these read CVNC…CNAC and CSNC…CNAC. 2 disordered regions span residues 271 to 311 and 323 to 359; these read MKKE…SPYP and PMGH…VTPP. Residues 279–291 are compositionally biased toward basic residues; the sequence is RNRKVSSRSKKKK.

Expressed in the developing ventral blood island, and in both tadpole and adult erythrocytes.

It localises to the nucleus. Functionally, transcription factor that acts synergistically with tal1/scl and lmo2 to specify embryonic dorsal mesoderm to a hematopoietic fate. The chain is GATA-binding factor 1-A (gata1-a) from Xenopus laevis (African clawed frog).